A 305-amino-acid chain; its full sequence is Syntaxin-123 (305 aa).

Residue methionine 1 is modified to N-acetylmethionine. Topologically, residues 1 to 278 (MNDLISSSFK…KVLQRNNRKW (278 aa)) are cytoplasmic. The stretch at 46 to 66 (VKEDMKAVDEIHKRLQDANEE) forms a coiled coil. One can recognise a t-SNARE coiled-coil homology domain in the interval 206–268 (LSEIQERHDT…MRGTDQLHGA (63 aa)). A helical; Anchor for type IV membrane protein transmembrane segment spans residues 279 to 299 (ACIATILAIVVVIVILFPILF). Topologically, residues 300-305 (NTLLRP) are vesicular.

This sequence belongs to the syntaxin family. Part of the t-SNARE complex. Expressed in tips of root hairs.

The protein resides in the membrane. Functionally, vesicle trafficking protein that functions in the secretory pathway. Acts in coordination with SYP132 to mediate tip-focused membrane trafficking for root hair tip growth. Functions in root hair elongation by forming SNARE complexes with VAMP721,VAMP722 or VAMP724. This chain is Syntaxin-123, found in Arabidopsis thaliana (Mouse-ear cress).